Reading from the N-terminus, the 372-residue chain is MSSPERKRKKRSLEPSPESTPNPSLPDDLIVSILARVSRLYYPILSLVSKSSRTLVTSPELYKTRSFFNRTESCLYVCLDFPPDPNPRWFTLYRKPNQNITEKTKNSSGFVLAPIPNHHSHSSSIVAIGSNIYAIGGSIENAPSSKVSILDCRSHTWHEAPSMRMKRNYPAANVVDGKIYVAGGLEEFDSSKWMEVFDIKTQTWEFVLSPLAERFIYRSLVIEGEIYIFGDKVVTYKPKEDRWGGVGEHQSMDLGLFFHSYCVIDNVLYCYRPGGIKWYESEKRSWRKLRGLKGLSKLASSCVKLADYGGKMALLWDKYIPCSGNKSHSISCAVVSLERCKNQGIRGKVEWFDDMLTVPSSYNFVGALAATL.

The segment covering 1-11 (MSSPERKRKKR) has biased composition (basic residues). Residues 1–24 (MSSPERKRKKRSLEPSPESTPNPS) form a disordered region. In terms of domain architecture, F-box spans 19-65 (STPNPSLPDDLIVSILARVSRLYYPILSLVSKSSRTLVTSPELYKTR). 4 Kelch repeats span residues 131–177 (NIYA…VVDG), 179–224 (IYVA…VIEG), 226–271 (IYIF…LYCY), and 273–312 (PGGI…GGKM).

The protein is F-box/kelch-repeat protein At5g49000 of Arabidopsis thaliana (Mouse-ear cress).